A 142-amino-acid chain; its full sequence is Ribosome-binding factor A (142 aa).

Residues 120–142 are disordered; sequence TLGEVQSESDQPTTYETTTVNKT. Residues 123–142 are compositionally biased toward polar residues; that stretch reads EVQSESDQPTTYETTTVNKT.

Belongs to the RbfA family. Monomer. Binds 30S ribosomal subunits, but not 50S ribosomal subunits or 70S ribosomes.

Its subcellular location is the cytoplasm. In terms of biological role, one of several proteins that assist in the late maturation steps of the functional core of the 30S ribosomal subunit. Associates with free 30S ribosomal subunits (but not with 30S subunits that are part of 70S ribosomes or polysomes). Required for efficient processing of 16S rRNA. May interact with the 5'-terminal helix region of 16S rRNA. This is Ribosome-binding factor A from Prochlorococcus marinus (strain MIT 9313).